Reading from the N-terminus, the 442-residue chain is Matrix remodeling-associated protein 8 (442 aa).

An N-terminal signal peptide occupies residues 1 to 19; that stretch reads MELLSRVLLWKLLLLQSSA. The Extracellular portion of the chain corresponds to 20–340; that stretch reads VLSSGPSGTA…PEDHTHFFQQ (321 aa). Ig-like V-type domains lie at 25–156 and 159–291; these read PSGT…LEVT and PLLS…LQVT. Cystine bridges form between cysteine 53–cysteine 136 and cysteine 185–cysteine 271. N-linked (GlcNAc...) asparagine glycosylation is present at asparagine 118. Residues 128–130 carry the RGD 1 motif; that stretch reads RGD. Serine 227 bears the Phosphoserine mark. The RGD 2 motif lies at 251 to 253; sequence RGD. The segment at 296–319 is disordered; that stretch reads EPPARASPGNGSGHSSAPSPDPTL. Asparagine 305 carries N-linked (GlcNAc...) asparagine glycosylation. A helical transmembrane segment spans residues 341-361; the sequence is LGYVLATLLLFILLLITVVLA. The Cytoplasmic segment spans residues 362 to 442; the sequence is TRYRHSGGCK…DKEFRKEYCK (81 aa).

As to quaternary structure, homodimer in cis. Does not appear to form trans-homodimers. Interacts with ITGB3; the interaction inhibits ITGAV:ITGB3 heterodimer formation. In terms of tissue distribution, widely expressed (at protein level). Highly expressed in brain where it localizes to the glia limitans, which is formed by the endfeet of astrocytes surrounding capillaries, and beneath the pia mater (at protein level). In lung, detected in epithelial cells of the bronchus (at protein level). Expressed in intercalated disks in the heart (at protein level). Detected in pancreatic alpha-cells in the islet of Langerhans (at protein level). In kidney, found in the brush border of the proximal convoluted tubule (at protein level). Expressed in the epithelium of the small intestine (at protein level). Weakly expressed in liver (at protein level). Detected in myeloid cells.

The protein localises to the cell membrane. It localises to the cell junction. Its subcellular location is the tight junction. It is found in the cytoplasm. The protein resides in the cell projection. The protein localises to the cilium membrane. It localises to the nucleus. In terms of biological role, transmembrane protein which can modulate activity of various signaling pathways, probably via binding to integrin ITGAV:ITGB3. Mediates heterophilic cell-cell interactions in vitro. Inhibits osteoclastogenesis downstream of TNFSF11/RANKL and CSF1, where it may function by attenuating signaling via integrin ITGB3 and MAP kinase p38. Plays a role in cartilage formation where it promotes proliferation and maturation of growth plate chondrocytes. Stimulates formation of primary cilia in chondrocytes. Enhances expression of genes involved in the hedgehog signaling pathway in chondrocytes, including the hedgehog signaling molecule IHH; may also promote signaling via the PTHLH/PTHrP pathway. Plays a role in angiogenesis where it suppresses migration of endothelial cells and also promotes their apoptosis. Inhibits VEGF-induced activation of AKT and p38 MAP kinase in endothelial cells. Also inhibits VTN (vitronectin)-mediated integrin ITGAV:ITGB3 signaling and activation of PTK2/FAK. May play a role in the maturation and maintenance of the blood-brain barrier. This Mus musculus (Mouse) protein is Matrix remodeling-associated protein 8.